The following is a 427-amino-acid chain: 3-phosphoshikimate 1-carboxyvinyltransferase (427 aa).

Residues Lys-22, Ser-23, and Arg-27 each coordinate 3-phosphoshikimate. Lys-22 lines the phosphoenolpyruvate pocket. Phosphoenolpyruvate-binding residues include Gly-96 and Arg-124. Positions 169, 170, 171, 197, 313, 336, and 340 each coordinate 3-phosphoshikimate. Gln-171 provides a ligand contact to phosphoenolpyruvate. Residue Asp-313 is the Proton acceptor of the active site. Positions 344, 386, and 411 each coordinate phosphoenolpyruvate.

Belongs to the EPSP synthase family. In terms of assembly, monomer.

It localises to the cytoplasm. It catalyses the reaction 3-phosphoshikimate + phosphoenolpyruvate = 5-O-(1-carboxyvinyl)-3-phosphoshikimate + phosphate. It participates in metabolic intermediate biosynthesis; chorismate biosynthesis; chorismate from D-erythrose 4-phosphate and phosphoenolpyruvate: step 6/7. Its function is as follows. Catalyzes the transfer of the enolpyruvyl moiety of phosphoenolpyruvate (PEP) to the 5-hydroxyl of shikimate-3-phosphate (S3P) to produce enolpyruvyl shikimate-3-phosphate and inorganic phosphate. This Salmonella arizonae (strain ATCC BAA-731 / CDC346-86 / RSK2980) protein is 3-phosphoshikimate 1-carboxyvinyltransferase.